A 236-amino-acid polypeptide reads, in one-letter code: Purine nucleoside phosphorylase DeoD-type 2 (236 aa).

A purine D-ribonucleoside is bound at residue histidine 5. Phosphate-binding positions include glycine 21, arginine 25, arginine 44, and arginine 88–threonine 91. A purine D-ribonucleoside is bound by residues glutamate 180–glutamate 182 and serine 204–aspartate 205. Aspartate 205 serves as the catalytic Proton donor.

It belongs to the PNP/UDP phosphorylase family. In terms of assembly, homohexamer; trimer of homodimers.

The catalysed reaction is a purine D-ribonucleoside + phosphate = a purine nucleobase + alpha-D-ribose 1-phosphate. The enzyme catalyses a purine 2'-deoxy-D-ribonucleoside + phosphate = a purine nucleobase + 2-deoxy-alpha-D-ribose 1-phosphate. In terms of biological role, catalyzes the reversible phosphorolytic breakdown of the N-glycosidic bond in the beta-(deoxy)ribonucleoside molecules, with the formation of the corresponding free purine bases and pentose-1-phosphate. The protein is Purine nucleoside phosphorylase DeoD-type 2 of Shewanella oneidensis (strain ATCC 700550 / JCM 31522 / CIP 106686 / LMG 19005 / NCIMB 14063 / MR-1).